The sequence spans 315 residues: Small ribosomal subunit protein uS2 (315 aa).

The interval A241–R315 is disordered. The span at H243–A288 shows a compositional bias: basic and acidic residues.

This sequence belongs to the universal ribosomal protein uS2 family.

This is Small ribosomal subunit protein uS2 from Anaeromyxobacter sp. (strain Fw109-5).